The following is a 346-amino-acid chain: Probable 3-hydroxyacyl-CoA dehydrogenase (346 aa).

The interval 322–346 is disordered; that stretch reads RANLSPSATPCTPWKARKATSCAPP.

This sequence belongs to the 3-hydroxyacyl-CoA dehydrogenase family.

It catalyses the reaction a (3S)-3-hydroxyacyl-CoA + NAD(+) = a 3-oxoacyl-CoA + NADH + H(+). The sequence is that of Probable 3-hydroxyacyl-CoA dehydrogenase from Deinococcus radiodurans (strain ATCC 13939 / DSM 20539 / JCM 16871 / CCUG 27074 / LMG 4051 / NBRC 15346 / NCIMB 9279 / VKM B-1422 / R1).